A 367-amino-acid polypeptide reads, in one-letter code: UDP-N-acetylglucosamine--N-acetylmuramyl-(pentapeptide) pyrophosphoryl-undecaprenol N-acetylglucosamine transferase (367 aa).

Residues 22-24, Asn-134, Arg-170, Ser-198, Ile-253, and Gln-298 contribute to the UDP-N-acetyl-alpha-D-glucosamine site; that span reads TGG.

The protein belongs to the glycosyltransferase 28 family. MurG subfamily.

Its subcellular location is the cell inner membrane. The enzyme catalyses di-trans,octa-cis-undecaprenyl diphospho-N-acetyl-alpha-D-muramoyl-L-alanyl-D-glutamyl-meso-2,6-diaminopimeloyl-D-alanyl-D-alanine + UDP-N-acetyl-alpha-D-glucosamine = di-trans,octa-cis-undecaprenyl diphospho-[N-acetyl-alpha-D-glucosaminyl-(1-&gt;4)]-N-acetyl-alpha-D-muramoyl-L-alanyl-D-glutamyl-meso-2,6-diaminopimeloyl-D-alanyl-D-alanine + UDP + H(+). It functions in the pathway cell wall biogenesis; peptidoglycan biosynthesis. Functionally, cell wall formation. Catalyzes the transfer of a GlcNAc subunit on undecaprenyl-pyrophosphoryl-MurNAc-pentapeptide (lipid intermediate I) to form undecaprenyl-pyrophosphoryl-MurNAc-(pentapeptide)GlcNAc (lipid intermediate II). The protein is UDP-N-acetylglucosamine--N-acetylmuramyl-(pentapeptide) pyrophosphoryl-undecaprenol N-acetylglucosamine transferase of Xylella fastidiosa (strain M23).